Here is a 641-residue protein sequence, read N- to C-terminus: Mannosyl-oligosaccharide 1,2-alpha-mannosidase IB (641 aa).

At threonine 2 the chain carries N-acetylthreonine. Residues 2 to 36 (TTPALLPLSGRRIPPLNLGPPSFPHHRATLRLSEK) are Cytoplasmic-facing. Residues 37 to 57 (FILLLILSAFITLCFGAFFFL) form a helical; Signal-anchor for type II membrane protein membrane-spanning segment. The Lumenal portion of the chain corresponds to 58–641 (PDSSKHKRFD…STLSGNPAVR (584 aa)). Cysteine 462 and cysteine 494 are disulfide-bonded. Glutamate 508 (proton donor) is an active-site residue. Position 619 (threonine 619) interacts with Ca(2+). An N-linked (GlcNAc...) asparagine glycan is attached at asparagine 631.

It belongs to the glycosyl hydrolase 47 family. It depends on Ca(2+) as a cofactor.

The protein resides in the golgi apparatus membrane. It catalyses the reaction N(4)-(alpha-D-Man-(1-&gt;2)-alpha-D-Man-(1-&gt;2)-alpha-D-Man-(1-&gt;3)-[alpha-D-Man-(1-&gt;2)-alpha-D-Man-(1-&gt;3)-[alpha-D-Man-(1-&gt;2)-alpha-D-Man-(1-&gt;6)]-alpha-D-Man-(1-&gt;6)]-beta-D-Man-(1-&gt;4)-beta-D-GlcNAc-(1-&gt;4)-beta-D-GlcNAc)-L-asparaginyl-[protein] (N-glucan mannose isomer 9A1,2,3B1,2,3) + 4 H2O = N(4)-(alpha-D-Man-(1-&gt;3)-[alpha-D-Man-(1-&gt;3)-[alpha-D-Man-(1-&gt;6)]-alpha-D-Man-(1-&gt;6)]-beta-D-Man-(1-&gt;4)-beta-D-GlcNAc-(1-&gt;4)-beta-D-GlcNAc)-L-asparaginyl-[protein] (N-glucan mannose isomer 5A1,2) + 4 beta-D-mannose. The catalysed reaction is N(4)-(alpha-D-Man-(1-&gt;2)-alpha-D-Man-(1-&gt;2)-alpha-D-Man-(1-&gt;3)-[alpha-D-Man-(1-&gt;3)-[alpha-D-Man-(1-&gt;2)-alpha-D-Man-(1-&gt;6)]-alpha-D-Man-(1-&gt;6)]-beta-D-Man-(1-&gt;4)-beta-D-GlcNAc-(1-&gt;4)-beta-D-GlcNAc)-L-asparaginyl-[protein] (N-glucan mannose isomer 8A1,2,3B1,3) + 3 H2O = N(4)-(alpha-D-Man-(1-&gt;3)-[alpha-D-Man-(1-&gt;3)-[alpha-D-Man-(1-&gt;6)]-alpha-D-Man-(1-&gt;6)]-beta-D-Man-(1-&gt;4)-beta-D-GlcNAc-(1-&gt;4)-beta-D-GlcNAc)-L-asparaginyl-[protein] (N-glucan mannose isomer 5A1,2) + 3 beta-D-mannose. It functions in the pathway protein modification; protein glycosylation. Its activity is regulated as follows. Inhibited by both 1-deoxymannojirimycin and kifunensine. In terms of biological role, involved in the maturation of Asn-linked oligosaccharides. Progressively trim alpha-1,2-linked mannose residues from Man(9)GlcNAc(2) to produce Man(5)GlcNAc(2). In Mus musculus (Mouse), this protein is Mannosyl-oligosaccharide 1,2-alpha-mannosidase IB (Man1a2).